A 137-amino-acid chain; its full sequence is Probable 4-amino-4-deoxy-L-arabinose-phosphoundecaprenol flippase subunit ArnF (137 aa).

At 1-3 (MNA) the chain is on the cytoplasmic side. A helical transmembrane segment spans residues 4–24 (LRGWLAALGSVLLASAAQLGM). The Periplasmic segment spans residues 25–44 (RWGMSRLPLPEAWAGQTPER). Residues 45-65 (AALLAVALAVAAYAASLLCWL) form a helical membrane-spanning segment. The Cytoplasmic segment spans residues 66-76 (AALRHLPLGRA). Residues 77 to 97 (YSLLSASYALVYLLAASLPAF) form a helical membrane-spanning segment. The Periplasmic portion of the chain corresponds to 98-100 (DET). Residues 101–121 (FSTSKTLGVGLVVLGVLTVNA) form a helical membrane-spanning segment. Residues 122–137 (RRTAAAPAHHPSRKAP) lie on the Cytoplasmic side of the membrane.

This sequence belongs to the ArnF family. In terms of assembly, heterodimer of ArnE and ArnF.

The protein resides in the cell inner membrane. It functions in the pathway bacterial outer membrane biogenesis; lipopolysaccharide biosynthesis. Its function is as follows. Translocates 4-amino-4-deoxy-L-arabinose-phosphoundecaprenol (alpha-L-Ara4N-phosphoundecaprenol) from the cytoplasmic to the periplasmic side of the inner membrane. The protein is Probable 4-amino-4-deoxy-L-arabinose-phosphoundecaprenol flippase subunit ArnF of Pseudomonas aeruginosa (strain ATCC 15692 / DSM 22644 / CIP 104116 / JCM 14847 / LMG 12228 / 1C / PRS 101 / PAO1).